The chain runs to 760 residues: Cyclin-D-binding Myb-like transcription factor 1 (760 aa).

The segment at 1–237 (MSTVEEDSDT…TPEEIEKLKE (237 aa)) is interaction with CCND2. Positions 87-170 (VTMTATTEVA…IDILMNNIER (84 aa)) are required for transcriptional activation. Residues 87–458 (VTMTATTEVA…DNTAISSSPM (372 aa)) are required for DNA-binding. Positions 176-760 (GIKDATEIIF…KDVEDLVNCH (585 aa)) are interaction with CCND1, CCND2 and CCND3. A Myb-like 1 domain is found at 225–263 (GKYTPEEIEKLKELRIKHGNDWATIGAALGRSASSVKDR). Positions 268-333 (KDTCNTGKWT…KWLNYLNWKQ (66 aa)) constitute an HTH myb-type domain. A DNA-binding region (H-T-H motif) is located at residues 306 to 329 (WAAVAERVGTRSEKQCRSKWLNYL). The Myb-like 2 domain maps to 339–388 (WTKEDEINLILRIAELDVADENDINWDLLAEGWSSVRSPQWLRSKWWTIK). Disordered stretches follow at residues 414–435 (KNNPTLLENKSGSGVPNSNTNS) and 738–760 (IGSSLGSPVSEDSKDVEDLVNCH). The interval 459–760 (AALQIPVQIT…KDVEDLVNCH (302 aa)) is required for transcriptional activation.

The protein belongs to the DMTF1 family. Interacts with the D-type cyclins CCND1, CCND2 and CCND3. Interaction with D-type cyclins may modulate transcriptional activation by this protein. In terms of processing, phosphorylated by the cyclin-D2/CDK4, cyclin-D3/CDK4 and cyclin-D2/CDK6 complexes and to a lesser extent by the cyclin-D1/CDK4 complex. In terms of tissue distribution, expressed at relatively low levels in colonic mucosa, ovary, peripheral leukocytes, prostate and small intestine, and at higher levels in spleen, testis and thymus. Expressed in multiple regions of the brain and CNS including amygdala, caudate, corpus callosum, hippocampus, substantia nigra and subthalamic nucleus. Isoform 1 is the predominant isoform in monocytes, macrophages and neutrophils, isoform 2 is most strongly expressed in peripheral blood leukocytes and quiescent CD34 positive cells, and isoform 3 is expressed at low levels in all hematopoietic cell types. Expression is frequently reduced in non-small-cell lung carcinomas (NSCLC) due to hemizygous gene deletion, strongly suggesting that this locus is haploinsufficient for tumor suppression. Loss of this locus frequently occurs in tumors which retain wild-type CDKN2A/ARF and p53/TP53 loci. Hemizygous gene deletion has also been observed in leukemic blasts from patients with abnormalities of the long arm of chromosome 7.

It localises to the nucleus. Transcriptional activator which activates the CDKN2A/ARF locus in response to Ras-Raf signaling, thereby promoting p53/TP53-dependent growth arrest. Binds to the consensus sequence 5'-CCCG[GT]ATGT-3'. Isoform 1 may cooperate with MYB to activate transcription of the ANPEP gene. Isoform 2 may antagonize transcriptional activation by isoform 1. This Homo sapiens (Human) protein is Cyclin-D-binding Myb-like transcription factor 1 (DMTF1).